We begin with the raw amino-acid sequence, 932 residues long: Protein translocase subunit SecA (932 aa).

Residues glutamine 87, 105 to 109, and aspartate 515 each bind ATP; that span reads GEGKT. 4 residues coordinate Zn(2+): cysteine 916, cysteine 918, cysteine 927, and histidine 928.

This sequence belongs to the SecA family. As to quaternary structure, monomer and homodimer. Part of the essential Sec protein translocation apparatus which comprises SecA, SecYEG and auxiliary proteins SecDF-YajC and YidC. The cofactor is Zn(2+).

Its subcellular location is the cell inner membrane. It is found in the cytoplasm. It catalyses the reaction ATP + H2O + cellular proteinSide 1 = ADP + phosphate + cellular proteinSide 2.. Functionally, part of the Sec protein translocase complex. Interacts with the SecYEG preprotein conducting channel. Has a central role in coupling the hydrolysis of ATP to the transfer of proteins into and across the cell membrane, serving both as a receptor for the preprotein-SecB complex and as an ATP-driven molecular motor driving the stepwise translocation of polypeptide chains across the membrane. This is Protein translocase subunit SecA from Burkholderia multivorans (strain ATCC 17616 / 249).